We begin with the raw amino-acid sequence, 233 residues long: Ribonuclease 3 (233 aa).

The RNase III domain maps to 4–126 (LNKLMERLGH…IVGAIYIDAG (123 aa)). Glu39 provides a ligand contact to Mg(2+). Asp43 is a catalytic residue. Residues Asp112 and Glu115 each coordinate Mg(2+). The active site involves Glu115. The 70-residue stretch at 153 to 222 (DAKSLLQEWL…AKRFLELLDD (70 aa)) folds into the DRBM domain.

Belongs to the ribonuclease III family. As to quaternary structure, homodimer. Mg(2+) is required as a cofactor.

Its subcellular location is the cytoplasm. It carries out the reaction Endonucleolytic cleavage to 5'-phosphomonoester.. Digests double-stranded RNA. Involved in the processing of primary rRNA transcript to yield the immediate precursors to the large and small rRNAs (23S and 16S). Processes some mRNAs, and tRNAs when they are encoded in the rRNA operon. Processes pre-crRNA and tracrRNA of type II CRISPR loci if present in the organism. The polypeptide is Ribonuclease 3 (Coxiella burnetii (strain CbuK_Q154) (Coxiella burnetii (strain Q154))).